A 294-amino-acid polypeptide reads, in one-letter code: Phosphoribosylaminoimidazole-succinocarboxamide synthase (294 aa).

This sequence belongs to the SAICAR synthetase family.

The enzyme catalyses 5-amino-1-(5-phospho-D-ribosyl)imidazole-4-carboxylate + L-aspartate + ATP = (2S)-2-[5-amino-1-(5-phospho-beta-D-ribosyl)imidazole-4-carboxamido]succinate + ADP + phosphate + 2 H(+). It functions in the pathway purine metabolism; IMP biosynthesis via de novo pathway; 5-amino-1-(5-phospho-D-ribosyl)imidazole-4-carboxamide from 5-amino-1-(5-phospho-D-ribosyl)imidazole-4-carboxylate: step 1/2. This Thermoplasma acidophilum (strain ATCC 25905 / DSM 1728 / JCM 9062 / NBRC 15155 / AMRC-C165) protein is Phosphoribosylaminoimidazole-succinocarboxamide synthase.